The sequence spans 163 residues: Large ribosomal subunit protein uL18 (163 aa).

The protein belongs to the universal ribosomal protein uL18 family. In terms of assembly, part of the 50S ribosomal subunit. Contacts the 5S and 23S rRNAs.

In terms of biological role, this is one of the proteins that bind and probably mediate the attachment of the 5S RNA into the large ribosomal subunit, where it forms part of the central protuberance. This is Large ribosomal subunit protein uL18 from Thermoplasma acidophilum (strain ATCC 25905 / DSM 1728 / JCM 9062 / NBRC 15155 / AMRC-C165).